The chain runs to 382 residues: Gap junction alpha-1 protein (382 aa).

Residues 2–23 lie on the Cytoplasmic side of the membrane; the sequence is GDWSALGKLLDKVQAYSTAGGK. S5 carries the post-translational modification Phosphoserine. The helical transmembrane segment at 24–44 threads the bilayer; sequence VWLSVLFIFRILLLGTAVESA. Over 45-76 the chain is Extracellular; it reads WGDEQSAFRCNTQQPGCENVCYDKSFPISHVR. 2 disulfides stabilise this stretch: C54-C192 and C187-C198. A helical membrane pass occupies residues 77–97; sequence FWVLQIIFVSVPTLLYLAHVF. Topologically, residues 98–155 are cytoplasmic; sequence YVMRKEEKLNKKEEELKVAQTDGVNVEMHLKQIEIKKFKYGIEEHGKVKMRGGLLRTY. Residue K144 forms a Glycyl lysine isopeptide (Lys-Gly) (interchain with G-Cter in SUMO) linkage. Residues 156 to 176 form a helical membrane-spanning segment; it reads IISILFKSVFEVAFLLIQWYI. Residues 177 to 207 are Extracellular-facing; that stretch reads YGFSLSAVYTCKRDPCPHQVDCFLSRPTEKT. A helical transmembrane segment spans residues 208 to 228; it reads IFIIFMLVVSLVSLALNIIEL. Topologically, residues 229–382 are cytoplasmic; that stretch reads FYVFFKGVKD…SRPRPDDLEI (154 aa). K237 is covalently cross-linked (Glycyl lysine isopeptide (Lys-Gly) (interchain with G-Cter in SUMO)). The interaction with NOV stretch occupies residues 244 to 382; that stretch reads SDPYHATTGP…SRPRPDDLEI (139 aa). Position 247 is a phosphotyrosine (Y247). S255, S257, and S262 each carry phosphoserine. Positions 264-382 are interaction with UBQLN4; sequence KYAYFNGCSS…SRPRPDDLEI (119 aa). S-nitrosocysteine is present on C271. T275 carries the phosphothreonine modification. Phosphoserine is present on residues S306 and S314. Polar residues predominate over residues 317–332; the sequence is QNRMGQAGSTISNSHA. A disordered region spans residues 317–382; that stretch reads QNRMGQAGST…SRPRPDDLEI (66 aa). Position 325 is a phosphoserine; by CK1 (S325). Residue T326 is modified to Phosphothreonine. Residues S328 and S330 each carry the phosphoserine; by CK1 modification. A phosphoserine mark is found at S344 and S365. Over residues 362–374 the composition is skewed to low complexity; that stretch reads RPSSRASSRASSR. The residue at position 368 (S368) is a Phosphoserine; by PKC/PRKCG and PKC/PRKCD. Phosphoserine occurs at positions 369 and 373.

It belongs to the connexin family. Alpha-type (group II) subfamily. A connexon is composed of a hexamer of connexins. Interacts with SGSM3. Interacts with RIC1/CIP150. Interacts with CNST and CSNK1D. Interacts (via C-terminus) with TJP1. Interacts (via C-terminus) with SRC (via SH3 domain). Interacts (not ubiquitinated) with UBQLN4 (via UBA domain). Interacts with NOV. Interacts with TMEM65. Interacts with ANK3/ANKG and PKP2. Phosphorylation at Ser-325, Ser-328 and Ser-330 by CK1 modulates gap junction assembly. Phosphorylated at Ser-368 by PRKCG; phosphorylation induces disassembly of gap junction plaques and inhibition of gap junction activity. Phosphorylation at Ser-368 by PRKCD triggers its internalization into small vesicles leading to proteasome-mediated degradation. Post-translationally, sumoylated with SUMO1, SUMO2 and SUMO3, which may regulate the level of functional Cx43 gap junctions at the plasma membrane. May be desumoylated by SENP1 or SENP2. In terms of processing, S-nitrosylation at Cys-271 is enriched at the muscle endothelial gap junction in arteries, it augments channel permeability and may regulate of smooth muscle cell to endothelial cell communication. Acetylated in the developing cortex; leading to delocalization from the cell membrane.

It localises to the cell membrane. It is found in the cell junction. The protein localises to the gap junction. Its subcellular location is the endoplasmic reticulum. Functionally, gap junction protein that acts as a regulator of bladder capacity. A gap junction consists of a cluster of closely packed pairs of transmembrane channels, the connexons, through which materials of low MW diffuse from one cell to a neighboring cell. May play a critical role in the physiology of hearing by participating in the recycling of potassium to the cochlear endolymph. Negative regulator of bladder functional capacity: acts by enhancing intercellular electrical and chemical transmission, thus sensitizing bladder muscles to cholinergic neural stimuli and causing them to contract. May play a role in cell growth inhibition through the regulation of NOV expression and localization. Plays an essential role in gap junction communication in the ventricles. The chain is Gap junction alpha-1 protein (GJA1) from Oryctolagus cuniculus (Rabbit).